The primary structure comprises 426 residues: N-formyl-4-amino-5-aminomethyl-2-methylpyrimidine deformylase (426 aa).

Residues 1–31 (MDQQIYSLQKKVEEHKEELIQLAKTLISYQT) adopt a coiled-coil conformation. Residue H89 participates in Zn(2+) binding. D91 is an active-site residue. A Zn(2+)-binding site is contributed by D122. The active-site Proton acceptor is E156. Zn(2+)-binding residues include E157, D180, and H394.

It belongs to the peptidase M20A family. Requires Zn(2+) as cofactor. The cofactor is Co(2+).

The catalysed reaction is N-formyl-4-amino-5-aminomethyl-2-methylpyrimidine + H2O = 4-amino-5-aminomethyl-2-methylpyrimidine + formate. The protein operates within cofactor biosynthesis; thiamine diphosphate biosynthesis. Functionally, catalyzes the deformylation of the formylaminopyrimidine N-formyl-4-amino-5-aminomethyl-2-methylpyrimidine (FAMP) to give the corresponding aminopyrimidine. In Bacillus subtilis (strain 168), this protein is N-formyl-4-amino-5-aminomethyl-2-methylpyrimidine deformylase.